The following is a 331-amino-acid chain: Phenylalanine--tRNA ligase alpha subunit (331 aa).

Mg(2+) is bound at residue glutamate 252.

It belongs to the class-II aminoacyl-tRNA synthetase family. Phe-tRNA synthetase alpha subunit type 1 subfamily. In terms of assembly, tetramer of two alpha and two beta subunits. Requires Mg(2+) as cofactor.

The protein resides in the cytoplasm. The enzyme catalyses tRNA(Phe) + L-phenylalanine + ATP = L-phenylalanyl-tRNA(Phe) + AMP + diphosphate + H(+). The protein is Phenylalanine--tRNA ligase alpha subunit of Xanthomonas axonopodis pv. citri (strain 306).